Here is a 360-residue protein sequence, read N- to C-terminus: Phosphoserine aminotransferase (360 aa).

An L-glutamate-binding site is contributed by arginine 42. Residues 76–77, tryptophan 102, threonine 152, aspartate 172, and glutamine 195 each bind pyridoxal 5'-phosphate; that span reads AS. Residue lysine 196 is modified to N6-(pyridoxal phosphate)lysine. 237-238 is a pyridoxal 5'-phosphate binding site; it reads NT.

Belongs to the class-V pyridoxal-phosphate-dependent aminotransferase family. SerC subfamily. In terms of assembly, homodimer. The cofactor is pyridoxal 5'-phosphate.

It localises to the cytoplasm. The catalysed reaction is O-phospho-L-serine + 2-oxoglutarate = 3-phosphooxypyruvate + L-glutamate. The enzyme catalyses 4-(phosphooxy)-L-threonine + 2-oxoglutarate = (R)-3-hydroxy-2-oxo-4-phosphooxybutanoate + L-glutamate. Its pathway is amino-acid biosynthesis; L-serine biosynthesis; L-serine from 3-phospho-D-glycerate: step 2/3. In terms of biological role, catalyzes the reversible conversion of 3-phosphohydroxypyruvate to phosphoserine and of 3-hydroxy-2-oxo-4-phosphonooxybutanoate to phosphohydroxythreonine. The sequence is that of Phosphoserine aminotransferase from Bacillus cereus (strain ZK / E33L).